The following is a 291-amino-acid chain: Nucleotide-binding protein RALTA_A0325 (291 aa).

8–15 (GISGSGKS) contributes to the ATP binding site. 57 to 60 (DIRS) contributes to the GTP binding site.

This sequence belongs to the RapZ-like family.

In terms of biological role, displays ATPase and GTPase activities. In Cupriavidus taiwanensis (strain DSM 17343 / BCRC 17206 / CCUG 44338 / CIP 107171 / LMG 19424 / R1) (Ralstonia taiwanensis (strain LMG 19424)), this protein is Nucleotide-binding protein RALTA_A0325.